A 560-amino-acid polypeptide reads, in one-letter code: Formate--tetrahydrofolate ligase (560 aa).

Position 70-77 (Thr70–Thr77) interacts with ATP.

The protein belongs to the formate--tetrahydrofolate ligase family.

The catalysed reaction is (6S)-5,6,7,8-tetrahydrofolate + formate + ATP = (6R)-10-formyltetrahydrofolate + ADP + phosphate. It functions in the pathway one-carbon metabolism; tetrahydrofolate interconversion. The chain is Formate--tetrahydrofolate ligase from Methanocorpusculum labreanum (strain ATCC 43576 / DSM 4855 / Z).